We begin with the raw amino-acid sequence, 418 residues long: S-adenosylmethionine synthase (418 aa).

Residue H16 participates in ATP binding. A Mg(2+)-binding site is contributed by D18. E44 provides a ligand contact to K(+). L-methionine is bound by residues E57 and Q100. The interval 100-110 is flexible loop; that stretch reads QSPDISQGVTK. ATP contacts are provided by residues 175–177, 251–252, D260, 266–267, A283, and K287; these read DGK, KF, and RK. D260 is a binding site for L-methionine. K291 is a binding site for L-methionine.

This sequence belongs to the AdoMet synthase family. As to quaternary structure, homotetramer; dimer of dimers. Requires Mg(2+) as cofactor. The cofactor is K(+).

The protein resides in the cytoplasm. The enzyme catalyses L-methionine + ATP + H2O = S-adenosyl-L-methionine + phosphate + diphosphate. It functions in the pathway amino-acid biosynthesis; S-adenosyl-L-methionine biosynthesis; S-adenosyl-L-methionine from L-methionine: step 1/1. Its function is as follows. Catalyzes the formation of S-adenosylmethionine (AdoMet) from methionine and ATP. The overall synthetic reaction is composed of two sequential steps, AdoMet formation and the subsequent tripolyphosphate hydrolysis which occurs prior to release of AdoMet from the enzyme. The protein is S-adenosylmethionine synthase of Gloeothece citriformis (strain PCC 7424) (Cyanothece sp. (strain PCC 7424)).